The following is a 136-amino-acid chain: ATP synthase epsilon chain (136 aa).

The tract at residues 104–136 (AGMEGQPASPEKVKAQQQLNEARARMQASKSAD) is disordered.

It belongs to the ATPase epsilon chain family. As to quaternary structure, F-type ATPases have 2 components, CF(1) - the catalytic core - and CF(0) - the membrane proton channel. CF(1) has five subunits: alpha(3), beta(3), gamma(1), delta(1), epsilon(1). CF(0) has three main subunits: a, b and c.

The protein resides in the cellular thylakoid membrane. Produces ATP from ADP in the presence of a proton gradient across the membrane. The protein is ATP synthase epsilon chain of Synechococcus sp. (strain CC9902).